Reading from the N-terminus, the 404-residue chain is Probable tRNA sulfurtransferase (404 aa).

One can recognise a THUMP domain in the interval 60–165 (QPIVEALKLV…DEAAYISYEE (106 aa)). ATP is bound by residues 183 to 184 (ML), 208 to 209 (HF), Arg265, Gly287, and Gln296.

This sequence belongs to the ThiI family.

Its subcellular location is the cytoplasm. It catalyses the reaction [ThiI sulfur-carrier protein]-S-sulfanyl-L-cysteine + a uridine in tRNA + 2 reduced [2Fe-2S]-[ferredoxin] + ATP + H(+) = [ThiI sulfur-carrier protein]-L-cysteine + a 4-thiouridine in tRNA + 2 oxidized [2Fe-2S]-[ferredoxin] + AMP + diphosphate. It carries out the reaction [ThiS sulfur-carrier protein]-C-terminal Gly-Gly-AMP + S-sulfanyl-L-cysteinyl-[cysteine desulfurase] + AH2 = [ThiS sulfur-carrier protein]-C-terminal-Gly-aminoethanethioate + L-cysteinyl-[cysteine desulfurase] + A + AMP + 2 H(+). The protein operates within cofactor biosynthesis; thiamine diphosphate biosynthesis. In terms of biological role, catalyzes the ATP-dependent transfer of a sulfur to tRNA to produce 4-thiouridine in position 8 of tRNAs, which functions as a near-UV photosensor. Also catalyzes the transfer of sulfur to the sulfur carrier protein ThiS, forming ThiS-thiocarboxylate. This is a step in the synthesis of thiazole, in the thiamine biosynthesis pathway. The sulfur is donated as persulfide by IscS. The polypeptide is Probable tRNA sulfurtransferase (Streptococcus pyogenes serotype M3 (strain ATCC BAA-595 / MGAS315)).